The chain runs to 119 residues: Flagellar transcriptional regulator FlhD (119 aa).

The protein belongs to the FlhD family. Homodimer; disulfide-linked. Forms a heterohexamer composed of two FlhC and four FlhD subunits. Each FlhC binds a FlhD dimer, forming a heterotrimer, and a hexamer assembles by dimerization of two heterotrimers.

The protein localises to the cytoplasm. Functions in complex with FlhC as a master transcriptional regulator that regulates transcription of several flagellar and non-flagellar operons by binding to their promoter region. Activates expression of class 2 flagellar genes, including fliA, which is a flagellum-specific sigma factor that turns on the class 3 genes. Also regulates genes whose products function in a variety of physiological pathways. The polypeptide is Flagellar transcriptional regulator FlhD (Cronobacter sakazakii (strain ATCC BAA-894) (Enterobacter sakazakii)).